Here is a 201-residue protein sequence, read N- to C-terminus: Pyridoxal 5'-phosphate synthase subunit PdxT (201 aa).

50–52 (GES) contacts L-glutamine. Cys82 (nucleophile) is an active-site residue. L-glutamine-binding positions include Arg111 and 139–140 (IR). Catalysis depends on charge relay system residues His180 and Glu182.

It belongs to the glutaminase PdxT/SNO family. As to quaternary structure, in the presence of PdxS, forms a dodecamer of heterodimers. Only shows activity in the heterodimer.

It carries out the reaction aldehydo-D-ribose 5-phosphate + D-glyceraldehyde 3-phosphate + L-glutamine = pyridoxal 5'-phosphate + L-glutamate + phosphate + 3 H2O + H(+). The catalysed reaction is L-glutamine + H2O = L-glutamate + NH4(+). The protein operates within cofactor biosynthesis; pyridoxal 5'-phosphate biosynthesis. In terms of biological role, catalyzes the hydrolysis of glutamine to glutamate and ammonia as part of the biosynthesis of pyridoxal 5'-phosphate. The resulting ammonia molecule is channeled to the active site of PdxS. The protein is Pyridoxal 5'-phosphate synthase subunit PdxT of Nocardioides sp. (strain ATCC BAA-499 / JS614).